The primary structure comprises 200 residues: Transcription elongation factor A protein-like 3 (200 aa).

The span at 1-19 (MEEVRGENEGKLEKEGKPE) shows a compositional bias: basic and acidic residues. A disordered region spans residues 1-200 (MEEVRGENEG…QRGLHDIPYL (200 aa)). The span at 20-34 (DEVEPEDEEKSDEDE) shows a compositional bias: acidic residues. Position 30 is a phosphoserine (S30). Composition is skewed to basic and acidic residues over residues 47 to 85 (GKPE…KPDS), 94 to 106 (RAAE…DYVP), and 114 to 153 (DRGT…EELR).

This sequence belongs to the TFS-II family. TFA subfamily.

The protein localises to the nucleus. Functionally, may be involved in transcriptional regulation. This is Transcription elongation factor A protein-like 3 (Tceal3) from Mus musculus (Mouse).